We begin with the raw amino-acid sequence, 441 residues long: Double-stranded RNA-binding protein 1 (441 aa).

DRBM domains follow at residues 1 to 71 (MYKS…HLSS), 86 to 155 (SYKS…SLPQ), and 169 to 237 (SYKN…HFED). Residues 69–88 (LSSLPLPPPPPPSENQSSYK) form a disordered region.

Functionally, binds double-stranded RNA. The sequence is that of Double-stranded RNA-binding protein 1 (DRB1) from Oryza sativa subsp. japonica (Rice).